Reading from the N-terminus, the 515-residue chain is Sugar transport protein MST4 (515 aa).

Residues 1–17 are Cytoplasmic-facing; sequence MAGGFSVSGSGVEFEAK. Residues 18–38 form a helical membrane-spanning segment; sequence ITPIVIISCIMAATGGLMFGY. The Extracellular portion of the chain corresponds to 39–78; sequence DVGISGGVTSMDDFLREFFPTVLKKKHEDKESNYCKYDNQ. A helical transmembrane segment spans residues 79-99; it reads GLQLFTSSLYLAGLTATFFAS. At 100 to 108 the chain is on the cytoplasmic side; it reads YTTRRLGRR. A helical membrane pass occupies residues 109–129; that stretch reads LTMLIAGVFFIVGVIFNGAAQ. At 130–138 the chain is on the extracellular side; the sequence is NLAMLIVGR. A helical membrane pass occupies residues 139–159; that stretch reads ILLGCGVGFANQAVPLFLSEI. Residues 160 to 165 are Cytoplasmic-facing; that stretch reads APTRIR. The helical transmembrane segment at 166–186 threads the bilayer; sequence GGLNILFQLNVTIGILFANLV. Residues 187–199 lie on the Extracellular side of the membrane; it reads NYGTAKIHPWGWR. Residues 200–220 traverse the membrane as a helical segment; the sequence is LSLSLAGIPAALLTLGALFVV. The Cytoplasmic segment spans residues 221-280; sequence DTPNSLIERGRLEEGKAVLRKIRGTDNVEPEFNEIVEASRVAQEVKHPFRNLLQRRNRPQ. Residues 281–301 form a helical membrane-spanning segment; it reads LVIAVLLQIFQQFTGINAIMF. Topologically, residues 302–315 are extracellular; that stretch reads YAPVLFNTLGFKTD. The helical transmembrane segment at 316 to 336 threads the bilayer; that stretch reads ASLYSAVITGAVNVLSTLVSV. At 337–347 the chain is on the cytoplasmic side; the sequence is YSVDRVGRRML. A helical transmembrane segment spans residues 348–368; it reads LLEAGVQMFLSQVAIAVVLGI. Topologically, residues 369–379 are extracellular; sequence KVTDRSDNLGH. Residues 380–400 form a helical membrane-spanning segment; the sequence is GWAIMVVVMVCTFVSSFAWSW. Residues 401-422 are Cytoplasmic-facing; sequence GPLGWLIPSETFPLETRSAGQS. Residues 423-443 traverse the membrane as a helical segment; the sequence is VTVCVNLLFTFVIAQAFLSML. Over 444 to 448 the chain is Extracellular; sequence CHLKY. Residues 449–469 form a helical membrane-spanning segment; sequence AIFAFFSAWVVVMSLFVLFFL. Over 470–515 the chain is Cytoplasmic; the sequence is PETKNIPIEEMTERVWKQHWFWKRFMDDADKHHVVPNGGKSNGATV.

The protein belongs to the major facilitator superfamily. Sugar transporter (TC 2.A.1.1) family. Expressed in roots, shoots, leaf blades, leaf sheaths, anthers, ovaries and embryos.

It is found in the membrane. Mediates active uptake of hexoses by sugar:proton symport. Can transport glucose, fructose, mannose and galactose. Can transport xylose and ribose. This chain is Sugar transport protein MST4, found in Oryza sativa subsp. japonica (Rice).